A 247-amino-acid chain; its full sequence is 23S rRNA (guanosine-2'-O-)-methyltransferase RlmB (247 aa).

S-adenosyl-L-methionine is bound by residues G197, I217, and L226.

It belongs to the class IV-like SAM-binding methyltransferase superfamily. RNA methyltransferase TrmH family. RlmB subfamily.

It is found in the cytoplasm. It carries out the reaction guanosine(2251) in 23S rRNA + S-adenosyl-L-methionine = 2'-O-methylguanosine(2251) in 23S rRNA + S-adenosyl-L-homocysteine + H(+). In terms of biological role, specifically methylates the ribose of guanosine 2251 in 23S rRNA. The polypeptide is 23S rRNA (guanosine-2'-O-)-methyltransferase RlmB (Vibrio parahaemolyticus serotype O3:K6 (strain RIMD 2210633)).